The sequence spans 66 residues: Large ribosomal subunit protein bL35 (66 aa).

Residues 1-26 (MPKMKTHRGAAKRVKRTASGKLKRSR) are compositionally biased toward basic residues. A disordered region spans residues 1-49 (MPKMKTHRGAAKRVKRTASGKLKRSRAFTSHLFANKSTKQKRKLRKASL).

This sequence belongs to the bacterial ribosomal protein bL35 family.

In Staphylococcus carnosus (strain TM300), this protein is Large ribosomal subunit protein bL35.